The following is a 102-amino-acid chain: Small ribosomal subunit protein uS10 (102 aa).

This sequence belongs to the universal ribosomal protein uS10 family. As to quaternary structure, part of the 30S ribosomal subunit.

In terms of biological role, involved in the binding of tRNA to the ribosomes. The chain is Small ribosomal subunit protein uS10 from Pelagibacter ubique (strain HTCC1062).